A 187-amino-acid chain; its full sequence is UPF0301 protein Spro_4027 (187 aa).

Belongs to the UPF0301 (AlgH) family.

The protein is UPF0301 protein Spro_4027 of Serratia proteamaculans (strain 568).